Reading from the N-terminus, the 505-residue chain is 2-isopropylmalate synthase (505 aa).

The region spanning 5–269 (IKIFDTTLRD…ETGIHTEYLY (265 aa)) is the Pyruvate carboxyltransferase domain. Positions 14, 204, 206, and 240 each coordinate Mn(2+). The segment at 393–505 (SLLYFHTFTG…AVNRFELRKR (113 aa)) is regulatory domain.

It belongs to the alpha-IPM synthase/homocitrate synthase family. LeuA type 1 subfamily. As to quaternary structure, homodimer. Mn(2+) is required as a cofactor.

It is found in the cytoplasm. It carries out the reaction 3-methyl-2-oxobutanoate + acetyl-CoA + H2O = (2S)-2-isopropylmalate + CoA + H(+). It functions in the pathway amino-acid biosynthesis; L-leucine biosynthesis; L-leucine from 3-methyl-2-oxobutanoate: step 1/4. Catalyzes the condensation of the acetyl group of acetyl-CoA with 3-methyl-2-oxobutanoate (2-ketoisovalerate) to form 3-carboxy-3-hydroxy-4-methylpentanoate (2-isopropylmalate). The polypeptide is 2-isopropylmalate synthase (Sediminispirochaeta smaragdinae (strain DSM 11293 / JCM 15392 / SEBR 4228) (Spirochaeta smaragdinae)).